The chain runs to 349 residues: Holliday junction branch migration complex subunit RuvB (349 aa).

Residues Met-1–Tyr-186 form a large ATPase domain (RuvB-L) region. ATP contacts are provided by residues Leu-25, Arg-26, Gly-67, Lys-70, Thr-71, Ser-72, Glu-133–Phe-135, Arg-176, Tyr-186, and Arg-223. Thr-71 provides a ligand contact to Mg(2+). A small ATPAse domain (RuvB-S) region spans residues Glu-187 to Asp-257. The segment at Glu-260 to Ser-349 is head domain (RuvB-H). Arg-315 and Arg-320 together coordinate DNA.

Belongs to the RuvB family. Homohexamer. Forms an RuvA(8)-RuvB(12)-Holliday junction (HJ) complex. HJ DNA is sandwiched between 2 RuvA tetramers; dsDNA enters through RuvA and exits via RuvB. An RuvB hexamer assembles on each DNA strand where it exits the tetramer. Each RuvB hexamer is contacted by two RuvA subunits (via domain III) on 2 adjacent RuvB subunits; this complex drives branch migration. In the full resolvosome a probable DNA-RuvA(4)-RuvB(12)-RuvC(2) complex forms which resolves the HJ.

The protein resides in the cytoplasm. The enzyme catalyses ATP + H2O = ADP + phosphate + H(+). Its function is as follows. The RuvA-RuvB-RuvC complex processes Holliday junction (HJ) DNA during genetic recombination and DNA repair, while the RuvA-RuvB complex plays an important role in the rescue of blocked DNA replication forks via replication fork reversal (RFR). RuvA specifically binds to HJ cruciform DNA, conferring on it an open structure. The RuvB hexamer acts as an ATP-dependent pump, pulling dsDNA into and through the RuvAB complex. RuvB forms 2 homohexamers on either side of HJ DNA bound by 1 or 2 RuvA tetramers; 4 subunits per hexamer contact DNA at a time. Coordinated motions by a converter formed by DNA-disengaged RuvB subunits stimulates ATP hydrolysis and nucleotide exchange. Immobilization of the converter enables RuvB to convert the ATP-contained energy into a lever motion, pulling 2 nucleotides of DNA out of the RuvA tetramer per ATP hydrolyzed, thus driving DNA branch migration. The RuvB motors rotate together with the DNA substrate, which together with the progressing nucleotide cycle form the mechanistic basis for DNA recombination by continuous HJ branch migration. Branch migration allows RuvC to scan DNA until it finds its consensus sequence, where it cleaves and resolves cruciform DNA. This chain is Holliday junction branch migration complex subunit RuvB, found in Mycobacterium leprae (strain Br4923).